A 361-amino-acid polypeptide reads, in one-letter code: Protein-L-isoaspartate O-methyltransferase domain-containing protein 2 (361 aa).

G2 carries N-myristoyl glycine lipidation. Residue S64 is part of the active site. 3 adoMet binding motif regions span residues L85–L94, Y160–Y164, and L181–L191. A BC-box region spans residues V240 to A250. Polar residues predominate over residues S303–G312. Residues S303–V335 form a disordered region. Positions L345–P348 are CUL-box.

It belongs to the methyltransferase superfamily. L-isoaspartyl/D-aspartyl protein methyltransferase family.

It is found in the cytoplasm. Its function is as follows. May act as a substrate recognition component of an ECS (Elongin BC-CUL5-SOCS-box protein) E3 ubiquitin ligase complex which mediates the ubiquitination and subsequent proteasomal degradation of target proteins. May bind to the methyltransferase cofactor S-adenosylmethionine (AdoMet) via the N-terminal AdoMet binding motif, but probably does not display methyltransferase activity. This chain is Protein-L-isoaspartate O-methyltransferase domain-containing protein 2 (PCMTD2), found in Bos taurus (Bovine).